We begin with the raw amino-acid sequence, 201 residues long: Probable nicotinate-nucleotide adenylyltransferase (201 aa).

It belongs to the NadD family.

The catalysed reaction is nicotinate beta-D-ribonucleotide + ATP + H(+) = deamido-NAD(+) + diphosphate. The protein operates within cofactor biosynthesis; NAD(+) biosynthesis; deamido-NAD(+) from nicotinate D-ribonucleotide: step 1/1. In terms of biological role, catalyzes the reversible adenylation of nicotinate mononucleotide (NaMN) to nicotinic acid adenine dinucleotide (NaAD). The polypeptide is Probable nicotinate-nucleotide adenylyltransferase (Clostridium botulinum (strain Loch Maree / Type A3)).